Reading from the N-terminus, the 249-residue chain is Glutathione S-transferase tcpG (249 aa).

A GST N-terminal domain is found at 20–109 (LYVRKAIPAP…YLCDKHDKDG (90 aa)). The 135-residue stretch at 115–249 (NATERAQVTS…TEEEIELHGR (135 aa)) folds into the GST C-terminal domain.

Belongs to the GST superfamily.

The enzyme catalyses RX + glutathione = an S-substituted glutathione + a halide anion + H(+). It functions in the pathway secondary metabolite biosynthesis. Its function is as follows. Glutathione S-transferase; part of the gene cluster that mediates the biosynthesis of an unusual class of epipolythiodioxopiperazines (ETPs) lacking the reactive thiol group important for toxicity. Firstly, L-tyrosine is prenylated by tcpD, before undergoing condensation with L-glycine in a reaction catalyzed by the NRPS tcpP leading to the diketopiperazine (DKP) backbone. Afterwards the alpha-carbon of tyrosine is oxidized by the cytochrome P450 tcpC to form a hydroxyl group. However, in contrast other ETP biosynthesis pathways studied so far, tcpC is not able to bishydroxylate the DKP at both alpha-carbon positions, but hydroxylates the alpha-carbon of the tyrosine part and the nitrogen of the glycine part. The next steps involve an alpha,beta-elimination reaction catalyzed by tcpI, a methylation by the methyltransferase tcpN the action of the four enzyme cascade tcpG/K/J/I. Due to a dysfunctional cytochrome P450 monooxygenase tcpC, the pathway leads to the biosynthesis of probable non-toxic metabolites lacking the reactive thiol group. The protein is Glutathione S-transferase tcpG of Claviceps purpurea (strain 20.1) (Ergot fungus).